A 503-amino-acid chain; its full sequence is Maturase K (503 aa).

This sequence belongs to the intron maturase 2 family. MatK subfamily.

The protein resides in the plastid. Its subcellular location is the chloroplast. Its function is as follows. Usually encoded in the trnK tRNA gene intron. Probably assists in splicing its own and other chloroplast group II introns. This chain is Maturase K, found in Thryptomene saxicola (Rock thryptomene).